The chain runs to 122 residues: MRKSYRVKTERDFQKVFKEGQSMANRGFVVYTLPKEKQKHFRVGISVGKKVGHTAVARNRLKRFIRATLTELKPEIRSDLDFLVIARPYARDFDMERTKKNLIHVLRLAKVLSNEETETEEK.

The protein belongs to the RnpA family. As to quaternary structure, consists of a catalytic RNA component (M1 or rnpB) and a protein subunit.

The catalysed reaction is Endonucleolytic cleavage of RNA, removing 5'-extranucleotides from tRNA precursor.. In terms of biological role, RNaseP catalyzes the removal of the 5'-leader sequence from pre-tRNA to produce the mature 5'-terminus. It can also cleave other RNA substrates such as 4.5S RNA. The protein component plays an auxiliary but essential role in vivo by binding to the 5'-leader sequence and broadening the substrate specificity of the ribozyme. This chain is Ribonuclease P protein component, found in Lactobacillus gasseri (strain ATCC 33323 / DSM 20243 / BCRC 14619 / CIP 102991 / JCM 1131 / KCTC 3163 / NCIMB 11718 / NCTC 13722 / AM63).